The sequence spans 386 residues: Succinate--CoA ligase [ADP-forming] subunit beta (386 aa).

The region spanning Lys-9–Glu-244 is the ATP-grasp domain. Residues Lys-46, Gly-53–Gly-55, Glu-99, Cys-102, and Glu-107 each bind ATP. Mg(2+)-binding residues include Asn-199 and Asp-213. Substrate-binding positions include Asn-264 and Gly-320 to Met-322.

Belongs to the succinate/malate CoA ligase beta subunit family. Heterotetramer of two alpha and two beta subunits. Mg(2+) serves as cofactor.

It catalyses the reaction succinate + ATP + CoA = succinyl-CoA + ADP + phosphate. The enzyme catalyses GTP + succinate + CoA = succinyl-CoA + GDP + phosphate. The protein operates within carbohydrate metabolism; tricarboxylic acid cycle; succinate from succinyl-CoA (ligase route): step 1/1. In terms of biological role, succinyl-CoA synthetase functions in the citric acid cycle (TCA), coupling the hydrolysis of succinyl-CoA to the synthesis of either ATP or GTP and thus represents the only step of substrate-level phosphorylation in the TCA. The beta subunit provides nucleotide specificity of the enzyme and binds the substrate succinate, while the binding sites for coenzyme A and phosphate are found in the alpha subunit. This is Succinate--CoA ligase [ADP-forming] subunit beta from Ehrlichia canis (strain Jake).